The sequence spans 389 residues: Serpin B13 (389 aa).

The protein belongs to the serpin family. Ov-serpin subfamily.

The protein resides in the cytoplasm. Its function is as follows. May play a role in the proliferation or differentiation of keratinocytes. The polypeptide is Serpin B13 (Serpinb13) (Mus musculus (Mouse)).